Consider the following 355-residue polypeptide: Protein RecA (355 aa).

65 to 72 (GPESSGKT) serves as a coordination point for ATP.

Belongs to the RecA family.

Its subcellular location is the cytoplasm. Its function is as follows. Can catalyze the hydrolysis of ATP in the presence of single-stranded DNA, the ATP-dependent uptake of single-stranded DNA by duplex DNA, and the ATP-dependent hybridization of homologous single-stranded DNAs. It interacts with LexA causing its activation and leading to its autocatalytic cleavage. This Pseudomonas entomophila (strain L48) protein is Protein RecA.